A 356-amino-acid polypeptide reads, in one-letter code: Solute carrier family 25 member 3 (356 aa).

Residues 1–44 (MFSSVAHLARANPFNAPHLQLVHDVSGPRSPPGPPRRSRHLAAA) constitute a mitochondrion transit peptide. Residues 45 to 57 (AVEGYSCEFGSMK) lie on the Mitochondrial intermembrane side of the membrane. Solcar repeat units follow at residues 57–141 (KYYA…FKAL), 154–238 (WRTS…TVEA), and 255–333 (EQLV…VKVY). The chain crosses the membrane as a helical span at residues 58–80 (YYALCGFGGVLSCGLTHTAVVPL). At 81–115 (DLVKCRMQVDPQKYKGIFNGFSITLKEDGVRGLAK) the chain is on the mitochondrial matrix side. K93 carries the post-translational modification N6-acetyllysine. K106 carries the N6-methyllysine modification. Residues 116-135 (GWAPTLIGYSMQGLCKFGFY) form a helical membrane-spanning segment. At 136–155 (EVFKALYSNILGEENTYLWR) the chain is on the mitochondrial intermembrane side. A helical transmembrane segment spans residues 156–177 (TSLYLAASASAEFFADIALAPM). At 178 to 212 (EAAKVRIQTQPGYANTLREAVPKMYKEEGLNAFYK) the chain is on the mitochondrial matrix side. Phosphotyrosine is present on Y190. K203 bears the N6-acetyllysine mark. A helical membrane pass occupies residues 213–232 (GVAPVWMRQIPYTMMKFACF). Over 233–255 (ERTVEALYKFVVPKPRSECTKAE) the chain is Mitochondrial intermembrane. A helical membrane pass occupies residues 256–278 (QLVVTFVAGYIAGVFCAIVSHPA). The Mitochondrial matrix segment spans residues 279–308 (DSVVSVLNKEKGSTASQVLQRLGFRGVWKG). Residues 309–327 (LFARIIMIGTLTALQWFIY) form a helical membrane-spanning segment. The Mitochondrial intermembrane segment spans residues 328-356 (DSVKVYFRLPRPPPPEMPESLKKKLGLTE).

This sequence belongs to the mitochondrial carrier (TC 2.A.29) family. As to quaternary structure, interacts with PPIF; the interaction is impaired by CsA.

It localises to the mitochondrion inner membrane. It catalyses the reaction phosphate(in) + H(+)(in) = phosphate(out) + H(+)(out). Functionally, inorganic ion transporter that transports phosphate or copper ions across the mitochondrial inner membrane into the matrix compartment. Mediates proton-coupled symport of phosphate ions necessary for mitochondrial oxidative phosphorylation of ADP to ATP. Transports copper ions probably in the form of anionic copper(I) complexes to maintain mitochondrial matrix copper pool and to supply copper for cytochrome C oxidase complex assembly. May also play a role in regulation of the mitochondrial permeability transition pore (mPTP). In Rattus norvegicus (Rat), this protein is Solute carrier family 25 member 3.